A 326-amino-acid polypeptide reads, in one-letter code: Protein FAM50 homolog (326 aa).

Residues 77-111 (ISNRDLQVARGDQSSSTQSKDSQEAREKEEHVAKH) are disordered. Basic and acidic residues predominate over residues 97–109 (DSQEAREKEEHVA).

This sequence belongs to the FAM50 family.

The polypeptide is Protein FAM50 homolog (Caenorhabditis elegans).